We begin with the raw amino-acid sequence, 392 residues long: Sugar efflux transporter A (392 aa).

Residues 1–10 (MIWIMTMARR) lie on the Cytoplasmic side of the membrane. Residues 11–31 (MNGVYAAFMLVAFMMGVAGAL) traverse the membrane as a helical segment. The Periplasmic portion of the chain corresponds to 32-48 (QAPTLSLFLSREVGAQP). Residues 49-69 (FWIGLFYTVNAIAGIGVSLWL) traverse the membrane as a helical segment. Topologically, residues 70–81 (AKRSDSQGDRRK) are cytoplasmic. A helical membrane pass occupies residues 82-102 (LIIFCCLMAIGNALLFAFNRH). The Periplasmic portion of the chain corresponds to 103 to 106 (YLTL). A helical membrane pass occupies residues 107–127 (ITCGVLLASLANTAMPQLFAL). The Cytoplasmic segment spans residues 128–149 (AREYADNSAREVVMFSSVMRAQ). The chain crosses the membrane as a helical span at residues 150–170 (LSLAWVIGPPLAFMLALNYGF). T171 is a topological domain (periplasmic). Residues 172–192 (VMFSIAAGIFTLSLVLIAFML) form a helical membrane-spanning segment. Topologically, residues 193-219 (PSVARVELPSENALSMQGGWQDSNVRM) are cytoplasmic. Residues 220-240 (LFVASTLMWTCNTMYIIDMPL) form a helical membrane-spanning segment. Residues 241–251 (WISSELGLPDK) are Periplasmic-facing. Residues 252–272 (LAGFLMGTAAGLEIPAMILAG) form a helical membrane-spanning segment. Residues 273 to 282 (YYVKRYGKRR) lie on the Cytoplasmic side of the membrane. Residues 283–303 (MMVIAVAAGVLFYTGLIFFNS) form a helical membrane-spanning segment. The Periplasmic segment spans residues 304–308 (RMALM). The chain crosses the membrane as a helical span at residues 309-329 (TLQLFNAVFIGIVAGIGMLWF). Residues 330-342 (QDLMPGRAGAATT) lie on the Cytoplasmic side of the membrane. A helical membrane pass occupies residues 343–363 (LFTNSISTGVILAGVIQGAIA). Residues 364–365 (QS) lie on the Periplasmic side of the membrane. The helical transmembrane segment at 366–386 (WGHFAVYWVIAVISVVALFLT) threads the bilayer. Residues 387-392 (AKVKDV) are Cytoplasmic-facing.

Belongs to the major facilitator superfamily. Set transporter family.

The protein localises to the cell inner membrane. Functionally, involved in the efflux of sugars. The physiological role may be the detoxification of non-metabolizable sugar analogs. Can transport IPTG, lactose and glucose. Has broad substrate specificity, with preferences for glucosides or galactosides with alkyl or aryl substituents. This chain is Sugar efflux transporter A (setA), found in Escherichia coli (strain K12).